The primary structure comprises 525 residues: Peptide chain release factor 3 (525 aa).

The 268-residue stretch at 9–276 (AKRRTFAIIS…GFTRYAPAPQ (268 aa)) folds into the tr-type G domain. GTP-binding positions include 18–25 (SHPDAGKT), 86–90 (DTPGH), and 140–143 (NKFD).

This sequence belongs to the TRAFAC class translation factor GTPase superfamily. Classic translation factor GTPase family. PrfC subfamily.

It is found in the cytoplasm. Increases the formation of ribosomal termination complexes and stimulates activities of RF-1 and RF-2. It binds guanine nucleotides and has strong preference for UGA stop codons. It may interact directly with the ribosome. The stimulation of RF-1 and RF-2 is significantly reduced by GTP and GDP, but not by GMP. The chain is Peptide chain release factor 3 from Francisella tularensis subsp. mediasiatica (strain FSC147).